We begin with the raw amino-acid sequence, 206 residues long: LOB domain-containing protein 2 (206 aa).

The segment at 1–20 (MMQRNSNNTSITSNISNNSS) is disordered. One can recognise an LOB domain in the interval 23–123 (QACASCKHQR…KSLVHNQPLI (101 aa)).

The protein belongs to the LOB domain-containing protein family.

The protein is LOB domain-containing protein 2 (LBD2) of Arabidopsis thaliana (Mouse-ear cress).